Consider the following 301-residue polypeptide: Oxygen-dependent coproporphyrinogen-III oxidase (301 aa).

Position 94 (Ser-94) interacts with substrate. His-98 and His-108 together coordinate a divalent metal cation. His-108 serves as the catalytic Proton donor. 110 to 112 (NVR) contacts substrate. His-147 and His-177 together coordinate a divalent metal cation. The segment at 242 to 277 (YVEFNLVYDRGTLFGLQSGGRTESILMSMPPLARWE) is important for dimerization. Residue 260–262 (GGR) coordinates substrate.

Belongs to the aerobic coproporphyrinogen-III oxidase family. As to quaternary structure, homodimer. A divalent metal cation is required as a cofactor.

The protein localises to the cytoplasm. It catalyses the reaction coproporphyrinogen III + O2 + 2 H(+) = protoporphyrinogen IX + 2 CO2 + 2 H2O. The protein operates within porphyrin-containing compound metabolism; protoporphyrin-IX biosynthesis; protoporphyrinogen-IX from coproporphyrinogen-III (O2 route): step 1/1. In terms of biological role, involved in the heme biosynthesis. Catalyzes the aerobic oxidative decarboxylation of propionate groups of rings A and B of coproporphyrinogen-III to yield the vinyl groups in protoporphyrinogen-IX. This Photobacterium profundum (strain SS9) protein is Oxygen-dependent coproporphyrinogen-III oxidase.